The chain runs to 266 residues: Ribonuclease HII (266 aa).

In terms of domain architecture, RNase H type-2 spans 73 to 266 (SPVAGVDEAG…NCGSRQKCEG (194 aa)). Aspartate 79, glutamate 80, and aspartate 173 together coordinate a divalent metal cation.

This sequence belongs to the RNase HII family. Mn(2+) serves as cofactor. Mg(2+) is required as a cofactor.

The protein resides in the cytoplasm. It carries out the reaction Endonucleolytic cleavage to 5'-phosphomonoester.. Functionally, endonuclease that specifically degrades the RNA of RNA-DNA hybrids. This Pelotomaculum thermopropionicum (strain DSM 13744 / JCM 10971 / SI) protein is Ribonuclease HII.